Reading from the N-terminus, the 303-residue chain is Probable endonuclease 4 (303 aa).

His75, His115, Glu151, Asp185, His188, His221, Asp234, His236, and Glu266 together coordinate Zn(2+).

Belongs to the AP endonuclease 2 family. The cofactor is Zn(2+).

It carries out the reaction Endonucleolytic cleavage to 5'-phosphooligonucleotide end-products.. Its function is as follows. Endonuclease IV plays a role in DNA repair. It cleaves phosphodiester bonds at apurinic or apyrimidinic (AP) sites, generating a 3'-hydroxyl group and a 5'-terminal sugar phosphate. This chain is Probable endonuclease 4, found in Ureaplasma parvum serovar 3 (strain ATCC 700970).